The primary structure comprises 323 residues: tRNA(Ile)-lysidine synthase (323 aa).

Position 33–38 (Ser33–Ser38) interacts with ATP.

The protein belongs to the tRNA(Ile)-lysidine synthase family.

The protein localises to the cytoplasm. It catalyses the reaction cytidine(34) in tRNA(Ile2) + L-lysine + ATP = lysidine(34) in tRNA(Ile2) + AMP + diphosphate + H(+). Functionally, ligates lysine onto the cytidine present at position 34 of the AUA codon-specific tRNA(Ile) that contains the anticodon CAU, in an ATP-dependent manner. Cytidine is converted to lysidine, thus changing the amino acid specificity of the tRNA from methionine to isoleucine. This Mycobacterium leprae (strain TN) protein is tRNA(Ile)-lysidine synthase.